The following is a 335-amino-acid chain: MGKNIKVSFKHVSKEYDLYQNKSDKIKGLFMPKSQKMQSFWALRDVSFDIHDGETVGLIGINGSGKSTISSIMSGVIPPTQGEVIINGETSLIAIAVGLKGPLTGYENIRLKLLMHGMKSSQINKLMPSIIEFADIGDFINQPIKNYSSGMRSRLGFAISVHTNPDILVIDEALSVGDQTFYEKCVDKINEFKARGKTIVFVSHSLGQVKSLCDRIIWMHHGEIREMGTAQEVAQKYDEFVKWFNKQPNDYKKKYQKEHKENQKAPQKKIYPNPNANKYRLTLFDKIFLTVLIALTILFGTLVATGKSFKGLISEESTTQIEKVVHVDNYDLKLN.

An ABC transporter domain is found at Ile26–Lys246. Position 60-67 (Gly60–Ser67) interacts with ATP.

The protein belongs to the ABC transporter superfamily. Teichoic acids exporter (TC 3.A.1.104.1) family. As to quaternary structure, the complex is composed of two ATP-binding proteins (TagH) and two transmembrane proteins (TagG).

Its subcellular location is the cell membrane. It carries out the reaction ATP + H2O + teichoic acidSide 1 = ADP + phosphate + teichoic acidSide 2.. Its function is as follows. Part of the ABC transporter complex TagGH involved in teichoic acids export. Responsible for energy coupling to the transport system. The sequence is that of Teichoic acids export ATP-binding protein TagH from Listeria monocytogenes serotype 4b (strain F2365).